Consider the following 118-residue polypeptide: Small ribosomal subunit protein uS13 (118 aa).

The segment at 92 to 118 is disordered; that stretch reads RRGHPLRGQRTRTNARTRKGPRKAIRK.

This sequence belongs to the universal ribosomal protein uS13 family. In terms of assembly, part of the 30S ribosomal subunit. Forms a loose heterodimer with protein S19. Forms two bridges to the 50S subunit in the 70S ribosome.

Its function is as follows. Located at the top of the head of the 30S subunit, it contacts several helices of the 16S rRNA. In the 70S ribosome it contacts the 23S rRNA (bridge B1a) and protein L5 of the 50S subunit (bridge B1b), connecting the 2 subunits; these bridges are implicated in subunit movement. Contacts the tRNAs in the A and P-sites. This Xanthomonas campestris pv. campestris (strain ATCC 33913 / DSM 3586 / NCPPB 528 / LMG 568 / P 25) protein is Small ribosomal subunit protein uS13.